Here is a 658-residue protein sequence, read N- to C-terminus: Cysteine-rich receptor-like protein kinase 36 (658 aa).

An N-terminal signal peptide occupies residues 1-26 (MERSNLFHIPCFLLLFLLFNINGVHT). 2 consecutive Gnk2-homologous domains span residues 27–128 (TFVC…NIHR) and 139–246 (NVPH…DYRF). The Extracellular portion of the chain corresponds to 27–281 (TFVCGDEDFS…KKGRMFQPWS (255 aa)). 5 N-linked (GlcNAc...) asparagine glycosylation sites follow: Asn-38, Asn-64, Asn-116, Asn-150, and Asn-163. A helical transmembrane segment spans residues 282–302 (VVVVVFPTGINLAVFVAFVLA). Residues 303 to 658 (YRRMRRRIYT…EVSITVLYPR (356 aa)) lie on the Cytoplasmic side of the membrane. The Protein kinase domain maps to 340 to 612 (FSLENKLGQG…ITWLARDGTF (273 aa)). ATP-binding positions include 346-354 (LGQGGFGSV) and Lys-368. A Phosphotyrosine modification is found at Tyr-413. The Proton acceptor role is filled by Asp-465. The residue at position 469 (Ser-469) is a Phosphoserine. Thr-505 carries the phosphothreonine modification. Residue Tyr-513 is modified to Phosphotyrosine.

This sequence belongs to the protein kinase superfamily. Ser/Thr protein kinase family. CRK subfamily. As to quaternary structure, interacts with CRK45. Post-translationally, autophosphorylated.

The protein localises to the cell membrane. The enzyme catalyses L-seryl-[protein] + ATP = O-phospho-L-seryl-[protein] + ADP + H(+). It carries out the reaction L-threonyl-[protein] + ATP = O-phospho-L-threonyl-[protein] + ADP + H(+). Functionally, forms a complex with CRK45 that may negatively control abscisic acid (ABA) and osmotic stress signal transduction. Can phosphorylate CRK45 in vitro. This chain is Cysteine-rich receptor-like protein kinase 36, found in Arabidopsis thaliana (Mouse-ear cress).